A 208-amino-acid polypeptide reads, in one-letter code: Uridine kinase (208 aa).

Position 11-18 (11-18 (GGTGSGKS)) interacts with ATP.

Belongs to the uridine kinase family.

Its subcellular location is the cytoplasm. It carries out the reaction uridine + ATP = UMP + ADP + H(+). It catalyses the reaction cytidine + ATP = CMP + ADP + H(+). Its pathway is pyrimidine metabolism; CTP biosynthesis via salvage pathway; CTP from cytidine: step 1/3. It functions in the pathway pyrimidine metabolism; UMP biosynthesis via salvage pathway; UMP from uridine: step 1/1. The sequence is that of Uridine kinase from Clostridium novyi (strain NT).